The primary structure comprises 248 residues: Anamorsin homolog (248 aa).

The segment at 4–129 is N-terminal SAM-like domain; that stretch reads FKGLQKSLYI…ETGSSARLSF (126 aa). Residues 130 to 161 are linker; sequence AKKNANAANVWKISGDDEELIDEEELLDEEDK. Cys-172, Cys-181, Cys-184, and Cys-186 together coordinate [2Fe-2S] cluster. The segment at 172-186 is fe-S binding site A; the sequence is CSTTGKRKACKNCSC. [4Fe-4S] cluster is bound by residues Cys-209, Cys-212, Cys-220, and Cys-223. 2 short sequence motifs (cx2C motif) span residues 209 to 212 and 220 to 223; these read CGNC and CSTC. Positions 209–223 are fe-S binding site B; that stretch reads CGNCYLGDAFRCSTC.

It belongs to the anamorsin family. Monomer. [2Fe-2S] cluster serves as cofactor. Requires [4Fe-4S] cluster as cofactor.

It localises to the cytoplasm. The protein resides in the mitochondrion intermembrane space. Component of the cytosolic iron-sulfur (Fe-S) protein assembly (CIA) machinery. Required for the maturation of extramitochondrial Fe-S proteins. Part of an electron transfer chain functioning in an early step of cytosolic Fe-S biogenesis, facilitating the de novo assembly of a [4Fe-4S] cluster on the cytosolic Fe-S scaffold complex. Electrons are transferred from NADPH via a FAD- and FMN-containing diflavin oxidoreductase. Together with the diflavin oxidoreductase, also required for the assembly of the diferric tyrosyl radical cofactor of ribonucleotide reductase (RNR), probably by providing electrons for reduction during radical cofactor maturation in the catalytic small subunit. This is Anamorsin homolog from Drosophila sechellia (Fruit fly).